A 418-amino-acid chain; its full sequence is Serine hydroxymethyltransferase (418 aa).

Residues Leu-118 and 122–124 (GHL) each bind (6S)-5,6,7,8-tetrahydrofolate. Lys-227 carries the post-translational modification N6-(pyridoxal phosphate)lysine. Glu-242 contributes to the (6S)-5,6,7,8-tetrahydrofolate binding site.

Belongs to the SHMT family. Homodimer. Pyridoxal 5'-phosphate serves as cofactor.

The protein localises to the cytoplasm. The catalysed reaction is (6R)-5,10-methylene-5,6,7,8-tetrahydrofolate + glycine + H2O = (6S)-5,6,7,8-tetrahydrofolate + L-serine. The protein operates within one-carbon metabolism; tetrahydrofolate interconversion. It functions in the pathway amino-acid biosynthesis; glycine biosynthesis; glycine from L-serine: step 1/1. In terms of biological role, catalyzes the reversible interconversion of serine and glycine with tetrahydrofolate (THF) serving as the one-carbon carrier. This reaction serves as the major source of one-carbon groups required for the biosynthesis of purines, thymidylate, methionine, and other important biomolecules. Also exhibits THF-independent aldolase activity toward beta-hydroxyamino acids, producing glycine and aldehydes, via a retro-aldol mechanism. The chain is Serine hydroxymethyltransferase from Chloroflexus aggregans (strain MD-66 / DSM 9485).